A 401-amino-acid polypeptide reads, in one-letter code: Chalcone synthase 1 (401 aa).

Residue Cys-168 is part of the active site.

It belongs to the thiolase-like superfamily. Chalcone/stilbene synthases family.

The enzyme catalyses (E)-4-coumaroyl-CoA + 3 malonyl-CoA + 3 H(+) = 2',4,4',6'-tetrahydroxychalcone + 3 CO2 + 4 CoA. Its pathway is secondary metabolite biosynthesis; flavonoid biosynthesis. The primary product of this enzyme is 4,2',4',6'-tetrahydroxychalcone (also termed naringenin-chalcone or chalcone) which can under specific conditions spontaneously isomerize into naringenin. The sequence is that of Chalcone synthase 1 (CHS1) from Sorghum bicolor (Sorghum).